The sequence spans 245 residues: Demethylmenaquinone methyltransferase (245 aa).

Residues Thr58, Asp79, and 106–107 (NA) each bind S-adenosyl-L-methionine.

It belongs to the class I-like SAM-binding methyltransferase superfamily. MenG/UbiE family.

It catalyses the reaction a 2-demethylmenaquinol + S-adenosyl-L-methionine = a menaquinol + S-adenosyl-L-homocysteine + H(+). Its pathway is quinol/quinone metabolism; menaquinone biosynthesis; menaquinol from 1,4-dihydroxy-2-naphthoate: step 2/2. Methyltransferase required for the conversion of demethylmenaquinol (DMKH2) to menaquinol (MKH2). The sequence is that of Demethylmenaquinone methyltransferase from Halalkalibacterium halodurans (strain ATCC BAA-125 / DSM 18197 / FERM 7344 / JCM 9153 / C-125) (Bacillus halodurans).